A 361-amino-acid chain; its full sequence is Phospho-N-acetylmuramoyl-pentapeptide-transferase (361 aa).

Transmembrane regions (helical) follow at residues 18 to 38 (VFNYLTFRSIVSALTALILVL), 73 to 93 (TMGGVLIIVAIVISVLLWGDL), 97 to 117 (FIWVILLVTVAFSAIGWMDDY), 135 to 155 (LLQSIIGALAAVYLYFSATTG), 168 to 188 (VLPNLGLFYIVLAYFVIVGSS), 196 to 216 (GLDGLALMPTVMIGAALGVFA), 235 to 255 (GAGEVVVFCSALVGAGLGFLW), 263 to 283 (VFMGDVGSLGLGAALGVTAVV), 288 to 308 (LVYFLMGGIFVAETLSVILQV), and 338 to 358 (KVIVRFWIITFILVLCGLATL).

It belongs to the glycosyltransferase 4 family. MraY subfamily. Mg(2+) serves as cofactor.

It localises to the cell inner membrane. It catalyses the reaction UDP-N-acetyl-alpha-D-muramoyl-L-alanyl-gamma-D-glutamyl-meso-2,6-diaminopimeloyl-D-alanyl-D-alanine + di-trans,octa-cis-undecaprenyl phosphate = di-trans,octa-cis-undecaprenyl diphospho-N-acetyl-alpha-D-muramoyl-L-alanyl-D-glutamyl-meso-2,6-diaminopimeloyl-D-alanyl-D-alanine + UMP. The protein operates within cell wall biogenesis; peptidoglycan biosynthesis. Functionally, catalyzes the initial step of the lipid cycle reactions in the biosynthesis of the cell wall peptidoglycan: transfers peptidoglycan precursor phospho-MurNAc-pentapeptide from UDP-MurNAc-pentapeptide onto the lipid carrier undecaprenyl phosphate, yielding undecaprenyl-pyrophosphoryl-MurNAc-pentapeptide, known as lipid I. This chain is Phospho-N-acetylmuramoyl-pentapeptide-transferase, found in Coxiella burnetii (strain CbuK_Q154) (Coxiella burnetii (strain Q154)).